A 679-amino-acid chain; its full sequence is MGALTSRQHAGVEEVDIPSNSVYRYPPKSGSYFASHFIMGGEKFDSTHPEGYLFGENSDLNFLGNRPVVFPYAAPPPQEPVKTLRSLVNIRKDTLRLVKCAEEVKSPGEEASKAKVHYNVEFTFDTDARVAITIYYQATEEFQNGIASYIPKDNSLQSETVQYKRGVCQQFCLPSHTVDPSEWAEEELGFDLDREVYPLVVHAVVDEGDEYFGHCHVLLGTFEKHTDGTFCVKPLKQKQVVDGVSYLLQEIYGIENKYNTQDSKVAEDEVSDNSAECVVCLSDVRDTLILPCRHLCLCNTCADTLRYQANNCPICRLPFRALLQIRAMRKKLGPLSPTSFNPIISSQTSDSEEHPSSENIPPGYEVVSLLEALNGPLTPSPAVPPLHVLGDGHLSGMLPSYGSDGHLPPVRTISPLDRLSDSSSQGLKLKKSLSKSTSQNSSVLHEEEDEHSCSESETQLSQRPSVQHLGEECGVTPESENLTLSSSGAIDQSSCTGTPLSSTISSPEGPASSSLAQSVMSMASSQISTDTVSSMSGSYIAPGTEEEGEALSSPQPASRAPSEEGEGLPAESPDSNFAGLPAGEQDAEGNDVIEEEDGSPTQEGQRTCAFLGMECDNNNDFDIASVKALDNKLCSEVCLPGAWQADDNAVSRNAQRRRLSSSSLEDSETRPCVWGPLAV.

The N-myristoyl glycine moiety is linked to residue Gly2. An RING-type zinc finger spans residues 277–316; sequence CVVCLSDVRDTLILPCRHLCLCNTCADTLRYQANNCPICR. The D-box 1 signature appears at 329-332; sequence RKKL. Composition is skewed to polar residues over residues 339–349 and 478–537; these read SFNPIISSQTS and ESEN…SMSG. 3 disordered regions span residues 339–362, 416–604, and 650–679; these read SFNP…NIPP, LDRL…TQEG, and VSRN…PLAV. Acidic residues predominate over residues 585–598; sequence QDAEGNDVIEEEDG. Positions 656 to 659 match the D-box 2 motif; the sequence is RRRL. Residues Ser660, Ser661, Ser662, and Ser663 each carry the phosphoserine modification.

Interacts with APBB1. Interacts with CHD1; CHD1-binding controls RNF157 stability. Interacts with ATRN, MEGF8, TECR, MSI2, PLRG1, BYSL, MTERF3, PSMA1, MRPS18B, PRPF4, FASTKD2, SLC25A1, SMU1, CNOT9, MRPS2, MAGT1, FXR2, EMD, PSMD8, HDAC1, RAN, HSD17B12, TXNDC5 and MRPL19. Phosphorylation at Ser-660, Ser-661, Ser-662 and Ser-663 downstream of the PI3K and MAPK pathways influences the E3 ligase activity and stability of RNF157 during the cell cycle in an anaphase-promoting complex/cyclosome-CDH1-dependent manner.

The protein resides in the cytoplasm. It catalyses the reaction S-ubiquitinyl-[E2 ubiquitin-conjugating enzyme]-L-cysteine + [acceptor protein]-L-lysine = [E2 ubiquitin-conjugating enzyme]-L-cysteine + N(6)-ubiquitinyl-[acceptor protein]-L-lysine.. Functionally, E3 ubiquitin ligase that ubiquitinates APBB1 for its degradation by the proteasome and thus prevents apoptosis and promotes survival of neurons. Has a dual role in neurons as it is also required for dendrite growth and maintenance for which its ligase activity is not critical. May act as a scaffold molecule to regulate this process. Acts as a downstream effector of the interconnected PI3K and MAPK signaling pathways and thus participates in the regulation of the cell cycle. The chain is E3 ubiquitin ligase RNF157 (RNF157) from Homo sapiens (Human).